We begin with the raw amino-acid sequence, 250 residues long: Probable transcriptional regulatory protein DIP1378 (250 aa).

The disordered stretch occupies residues Met1–Gly22.

It belongs to the TACO1 family.

The protein resides in the cytoplasm. This Corynebacterium diphtheriae (strain ATCC 700971 / NCTC 13129 / Biotype gravis) protein is Probable transcriptional regulatory protein DIP1378.